A 583-amino-acid chain; its full sequence is CTP synthase (583 aa).

The tract at residues 1 to 278 (MRRHPQTATK…DAFVVRRLNL (278 aa)) is amidoligase domain. Ser20 is a CTP binding site. Position 20 (Ser20) interacts with UTP. ATP contacts are provided by residues 21–26 (SLGKGL) and Asp78. 2 residues coordinate Mg(2+): Asp78 and Glu152. Residues 159-161 (DIE), 199-204 (KTKPTQ), and Lys235 contribute to the CTP site. UTP-binding positions include 199–204 (KTKPTQ) and Lys235. The 249-residue stretch at 303–551 (RIALVGKYVE…VKAAIDYKEG (249 aa)) folds into the Glutamine amidotransferase type-1 domain. Gly366 serves as a coordination point for L-glutamine. Residue Cys393 is the Nucleophile; for glutamine hydrolysis of the active site. L-glutamine-binding positions include 394–397 (LGLQ), Glu416, and Arg477. Residues His524 and Glu526 contribute to the active site. A disordered region spans residues 559 to 583 (PERVSNGAERRDQVGQSIPEPANRG).

This sequence belongs to the CTP synthase family. As to quaternary structure, homotetramer.

It catalyses the reaction UTP + L-glutamine + ATP + H2O = CTP + L-glutamate + ADP + phosphate + 2 H(+). The enzyme catalyses L-glutamine + H2O = L-glutamate + NH4(+). It carries out the reaction UTP + NH4(+) + ATP = CTP + ADP + phosphate + 2 H(+). It participates in pyrimidine metabolism; CTP biosynthesis via de novo pathway; CTP from UDP: step 2/2. Allosterically activated by GTP, when glutamine is the substrate; GTP has no effect on the reaction when ammonia is the substrate. The allosteric effector GTP functions by stabilizing the protein conformation that binds the tetrahedral intermediate(s) formed during glutamine hydrolysis. Inhibited by the product CTP, via allosteric rather than competitive inhibition. Its function is as follows. Catalyzes the ATP-dependent amination of UTP to CTP with either L-glutamine or ammonia as the source of nitrogen. Regulates intracellular CTP levels through interactions with the four ribonucleotide triphosphates. The chain is CTP synthase from Mycobacterium marinum (strain ATCC BAA-535 / M).